A 36-amino-acid chain; its full sequence is Kappa-theraphotoxin-Pg1a (36 aa).

3 disulfides stabilise this stretch: Cys4/Cys19, Cys11/Cys24, and Cys18/Cys31.

The protein belongs to the neurotoxin 10 (Hwtx-1) family. 44 (Jztx-4) subfamily. As to expression, expressed by the venom gland.

It is found in the secreted. Functionally, gating modifier of Kv2.1/KCNB1 (IC(50)=5.1 nM), Kv2.2/KCNB2 and Kv4.3/KCND3 channels (IC(50)=39 nM). Acts by shifting the channel activation to more depolarized potentials by stabilizing the resting conformation of the voltage sensor. It completely inhibits opening of the Kv2.1/KCNB1 channel at negative membrane voltages and dramatically shifts channel activation to positive voltages. May act by partitioning into lipid membranes and then by binding the voltage sensor paddle of the channel from a place within the membrane. In Chilobrachys guangxiensis (Chinese earth tiger tarantula), this protein is Kappa-theraphotoxin-Pg1a.